A 341-amino-acid polypeptide reads, in one-letter code: Protein-glutamate methylesterase/protein-glutamine glutaminase 2 (341 aa).

A Response regulatory domain is found at 7–120 (KTLIVDDSLL…NRDLDSFFSE (114 aa)). D58 bears the 4-aspartylphosphate mark. Positions 155–341 (VIAIGASTGG…QALYKLINQL (187 aa)) constitute a CheB-type methylesterase domain. Residues S161, H187, and D283 contribute to the active site.

The protein belongs to the CheB family. In terms of processing, phosphorylated by CheA. Phosphorylation of the N-terminal regulatory domain activates the methylesterase activity.

The protein localises to the cytoplasm. The catalysed reaction is [protein]-L-glutamate 5-O-methyl ester + H2O = L-glutamyl-[protein] + methanol + H(+). It carries out the reaction L-glutaminyl-[protein] + H2O = L-glutamyl-[protein] + NH4(+). Its function is as follows. Involved in chemotaxis. Part of a chemotaxis signal transduction system that modulates chemotaxis in response to various stimuli. Catalyzes the demethylation of specific methylglutamate residues introduced into the chemoreceptors (methyl-accepting chemotaxis proteins or MCP) by CheR. Also mediates the irreversible deamidation of specific glutamine residues to glutamic acid. In Syntrophomonas wolfei subsp. wolfei (strain DSM 2245B / Goettingen), this protein is Protein-glutamate methylesterase/protein-glutamine glutaminase 2.